A 411-amino-acid chain; its full sequence is Serine hydroxymethyltransferase (411 aa).

Residue 120 to 122 (GHL) participates in (6S)-5,6,7,8-tetrahydrofolate binding. An N6-(pyridoxal phosphate)lysine modification is found at Lys225. Residues Glu241 and 350-352 (SPF) contribute to the (6S)-5,6,7,8-tetrahydrofolate site.

The protein belongs to the SHMT family. Homodimer. Pyridoxal 5'-phosphate serves as cofactor.

It is found in the cytoplasm. The enzyme catalyses (6R)-5,10-methylene-5,6,7,8-tetrahydrofolate + glycine + H2O = (6S)-5,6,7,8-tetrahydrofolate + L-serine. It functions in the pathway one-carbon metabolism; tetrahydrofolate interconversion. Its pathway is amino-acid biosynthesis; glycine biosynthesis; glycine from L-serine: step 1/1. Its function is as follows. Catalyzes the reversible interconversion of serine and glycine with tetrahydrofolate (THF) serving as the one-carbon carrier. This reaction serves as the major source of one-carbon groups required for the biosynthesis of purines, thymidylate, methionine, and other important biomolecules. Also exhibits THF-independent aldolase activity toward beta-hydroxyamino acids, producing glycine and aldehydes, via a retro-aldol mechanism. This is Serine hydroxymethyltransferase from Limosilactobacillus fermentum (strain NBRC 3956 / LMG 18251) (Lactobacillus fermentum).